Here is a 211-residue protein sequence, read N- to C-terminus: Large ribosomal subunit protein uL4 (211 aa).

The segment at 44 to 90 (ERQGTHSTLTKGEVRGGGKKPWRQKHTGKARTGSTRNPHWTGGGVVF) is disordered. Basic residues predominate over residues 60–72 (GGKKPWRQKHTGK).

This sequence belongs to the universal ribosomal protein uL4 family. As to quaternary structure, part of the 50S ribosomal subunit.

Its function is as follows. One of the primary rRNA binding proteins, this protein initially binds near the 5'-end of the 23S rRNA. It is important during the early stages of 50S assembly. It makes multiple contacts with different domains of the 23S rRNA in the assembled 50S subunit and ribosome. In terms of biological role, forms part of the polypeptide exit tunnel. The polypeptide is Large ribosomal subunit protein uL4 (Ureaplasma parvum serovar 3 (strain ATCC 27815 / 27 / NCTC 11736)).